The sequence spans 356 residues: UDP-N-acetylglucosamine--N-acetylmuramyl-(pentapeptide) pyrophosphoryl-undecaprenol N-acetylglucosamine transferase (356 aa).

UDP-N-acetyl-alpha-D-glucosamine-binding positions include 15–17 (TGG), Asn-127, Arg-163, Ser-191, Ile-244, 263–268 (ALTVSE), and Gln-288.

It belongs to the glycosyltransferase 28 family. MurG subfamily.

It localises to the cell inner membrane. The catalysed reaction is di-trans,octa-cis-undecaprenyl diphospho-N-acetyl-alpha-D-muramoyl-L-alanyl-D-glutamyl-meso-2,6-diaminopimeloyl-D-alanyl-D-alanine + UDP-N-acetyl-alpha-D-glucosamine = di-trans,octa-cis-undecaprenyl diphospho-[N-acetyl-alpha-D-glucosaminyl-(1-&gt;4)]-N-acetyl-alpha-D-muramoyl-L-alanyl-D-glutamyl-meso-2,6-diaminopimeloyl-D-alanyl-D-alanine + UDP + H(+). Its pathway is cell wall biogenesis; peptidoglycan biosynthesis. Its function is as follows. Cell wall formation. Catalyzes the transfer of a GlcNAc subunit on undecaprenyl-pyrophosphoryl-MurNAc-pentapeptide (lipid intermediate I) to form undecaprenyl-pyrophosphoryl-MurNAc-(pentapeptide)GlcNAc (lipid intermediate II). This is UDP-N-acetylglucosamine--N-acetylmuramyl-(pentapeptide) pyrophosphoryl-undecaprenol N-acetylglucosamine transferase from Yersinia pseudotuberculosis serotype O:1b (strain IP 31758).